Here is a 425-residue protein sequence, read N- to C-terminus: Formyl-CoA:oxalate CoA-transferase (425 aa).

CoA-binding positions include 17-18 (QS), arginine 38, 72-75 (LDTK), 96-98 (NFG), arginine 104, and 136-139 (KVYE). The Nucleophile role is filled by aspartate 168. 247 to 249 (GGQ) contacts substrate.

It belongs to the CoA-transferase III family. Frc subfamily. Homodimer.

The catalysed reaction is formyl-CoA + oxalate = oxalyl-CoA + formate. It functions in the pathway metabolic intermediate degradation; oxalate degradation; CO(2) and formate from oxalate: step 1/2. In terms of biological role, involved in the catabolism of oxalate and in the adapatation to low pH via the induction of the oxalate-dependent acid tolerance response (ATR). Catalyzes the transfer of the CoA moiety from formyl-CoA to oxalate. The sequence is that of Formyl-CoA:oxalate CoA-transferase from Rhodopseudomonas palustris (strain TIE-1).